The chain runs to 659 residues: Pentatricopeptide repeat-containing protein At3g48810 (659 aa).

16 PPR repeats span residues 75 to 109, 110 to 144, 145 to 179, 180 to 214, 215 to 243, 245 to 279, 280 to 314, 315 to 350, 351 to 385, 386 to 420, 421 to 455, 456 to 490, 492 to 526, 527 to 561, 562 to 598, and 599 to 633; these read TPLT…GFHC, SEDL…GCDP, SVKI…GFEP, NVFT…GCCP, DAVS…ERFE, VVSV…GISP, NVIS…GCHP, NIYT…GLQP, NVVA…GCSP, NIRT…GCCP, NVVV…NCAP, SVPT…HRCP, NIVT…GVEW, SSST…GKSP, DEIT…KWRP, and DVIS…GIVP.

Belongs to the PPR family. P subfamily.

The chain is Pentatricopeptide repeat-containing protein At3g48810 from Arabidopsis thaliana (Mouse-ear cress).